A 540-amino-acid chain; its full sequence is ATP-dependent RNA helicase DBP3 (540 aa).

A compositionally biased stretch (basic and acidic residues) spans 1–35 (MTVEESKKRKLTDDVAIKQNEKKIKKDKKVKDKKD). The tract at residues 1–89 (MTVEESKKRK…TTEQPSKQVK (89 aa)) is disordered. Residues 36–52 (KKDKKDKKDKKEKKEKK) show a composition bias toward basic residues. Basic and acidic residues-rich tracts occupy residues 53 to 62 (EKKEKNDKKD) and 68 to 79 (DKKAEQVDKLSE). A Q motif motif is present at residues 130–156 (LAFNQISLDKEVQNEIAKFPKPTPIQA). In terms of domain architecture, Helicase ATP-binding spans 159–332 (WPYLLSGKDV…STFMKEPVKV (174 aa)). Residue 172 to 179 (AETGSGKT) coordinates ATP. The DEAD box signature appears at 279 to 282 (DEAD). A Helicase C-terminal domain is found at 361-510 (KLLDLLKKYQ…PVPEDLIKFG (150 aa)).

It belongs to the DEAD box helicase family. DDX5/DBP2 subfamily.

The protein localises to the nucleus. The protein resides in the nucleolus. The catalysed reaction is ATP + H2O = ADP + phosphate + H(+). Its function is as follows. ATP-dependent RNA helicase required for 60S ribosomal subunit synthesis. Involved in efficient pre-rRNA processing, predominantly at site A3, which is necessary for the normal formation of 25S and 5.8S rRNAs. In Candida glabrata (strain ATCC 2001 / BCRC 20586 / JCM 3761 / NBRC 0622 / NRRL Y-65 / CBS 138) (Yeast), this protein is ATP-dependent RNA helicase DBP3 (DBP3).